The following is a 174-amino-acid chain: Disulfide bond formation protein B (174 aa).

Residues 1–17 (MSFQVVTGWLDNSPRRI) are Cytoplasmic-facing. Residues 18–34 (FAFVSLASIGMLAFGQY) traverse the membrane as a helical segment. The Periplasmic segment spans residues 35–52 (LQHVVGLEPCPMCIVQRY). C44 and C47 are joined by a disulfide. Residues 53–67 (ALVLVAIIAGLTGAS) traverse the membrane as a helical segment. Topologically, residues 68–74 (GRKGLHL) are cytoplasmic. The helical transmembrane segment at 75-92 (GGAVLMLGSSGFGAYVAA) threads the bilayer. The Periplasmic segment spans residues 93-148 (RQSWLQWYPPEVVSCGRDFYGMIETFPLQRAIPMIFKGSGDCSKVDWTFLGGSIAN). C107 and C134 form a disulfide bridge. Residues 149–167 (WTFVVFGLIVLLSLALIWR) traverse the membrane as a helical segment. At 168–174 (RVSRRVS) the chain is on the cytoplasmic side.

Belongs to the DsbB family.

It localises to the cell inner membrane. Its function is as follows. Required for disulfide bond formation in some periplasmic proteins. Acts by oxidizing the DsbA protein. The polypeptide is Disulfide bond formation protein B (Albidiferax ferrireducens (strain ATCC BAA-621 / DSM 15236 / T118) (Rhodoferax ferrireducens)).